The sequence spans 326 residues: Isopenicillin N synthase (326 aa).

The isopenicillin N site is built by Arg-84, Tyr-88, and Tyr-186. N-[(5S)-5-amino-5-carboxypentanoyl]-L-cysteinyl-D-valine contacts are provided by Arg-84, Tyr-88, Tyr-186, His-209, and Asp-211. The Fe2OG dioxygenase domain occupies 183-283 (LIRYPFLENY…RLSIPFFANL (101 aa)). The Fe(2+) site is built by His-209, Asp-211, and His-265. Arg-274 lines the 2-oxoglutarate pocket. Ser-276 contributes to the isopenicillin N binding site. Ser-276 contributes to the N-[(5S)-5-amino-5-carboxypentanoyl]-L-cysteinyl-D-valine binding site.

This sequence belongs to the iron/ascorbate-dependent oxidoreductase family. It depends on Fe cation as a cofactor. L-ascorbate is required as a cofactor.

The catalysed reaction is N-[(5S)-5-amino-5-carboxypentanoyl]-L-cysteinyl-D-valine + O2 = isopenicillin N + 2 H2O. The protein operates within antibiotic biosynthesis; penicillin G biosynthesis; penicillin G from L-alpha-aminoadipate and L-cysteine and L-valine: step 2/3. Functionally, removes, in the presence of oxygen, 4 hydrogen atoms from delta-L-(alpha-aminoadipyl)-L-cysteinyl-D-valine (ACV) to form the azetidinone and thiazolidine rings of isopenicillin. The protein is Isopenicillin N synthase (pcbC) of Flavobacterium sp. (strain SC 12,154).